We begin with the raw amino-acid sequence, 526 residues long: Arylsulfatase G (526 aa).

The signal sequence occupies residues 1-16; sequence MGWLFLKVLLVGMVFS. Asp-44, Asp-45, and Cys-84 together coordinate Ca(2+). Catalysis depends on Cys-84, which acts as the Nucleophile. Cys-84 is subject to 3-oxoalanine (Cys). The N-linked (GlcNAc...) asparagine glycan is linked to Asn-117. Lys-137 contributes to the substrate binding site. Residue His-139 is part of the active site. Ser-162 serves as a coordination point for substrate. Asn-215 carries N-linked (GlcNAc...) asparagine glycosylation. A substrate-binding site is contributed by His-251. Ca(2+)-binding residues include Asp-302 and Asn-303. N-linked (GlcNAc...) asparagine glycans are attached at residues Asn-356 and Asn-497.

The protein belongs to the sulfatase family. Requires Ca(2+) as cofactor. In terms of processing, N-glycosylated with both high mannose and complex type sugars. The conversion to 3-oxoalanine (also known as C-formylglycine, FGly), of a serine or cysteine residue in prokaryotes and of a cysteine residue in eukaryotes, is critical for catalytic activity. Post-translationally, 63-kDa precursor undergoes proteolytic processing in two steps, yielding two fragments in the first step (apparent molecular masses of 44 and 18 kDa). In the second step, the 44-kDa fragment is processed further to the 34- and 10-kDa chains. The 10-kDa chain is a cleavage product of the 44-kDa fragment but linked to the 18-kDa chain through a disulfide bridge.

Its subcellular location is the lysosome. It catalyses the reaction an aryl sulfate + H2O = a phenol + sulfate + H(+). It carries out the reaction Hydrolysis of the 3-sulfate groups of the N-sulfo-D-glucosamine 3-O-sulfate units of heparin.. In terms of biological role, displays arylsulfatase activity at acidic pH towards the artificial substrate p-nitrocatechol sulfate. Catalyzes the hydrolysis of the 3-sulfate groups of the N-sulfo-D-glucosamine 3-O-sulfate units of heparin. This Rattus norvegicus (Rat) protein is Arylsulfatase G (Arsg).